A 113-amino-acid chain; its full sequence is T cell receptor alpha variable 5 (113 aa).

Positions 1 to 22 (MKTFAGFSFLFLWLQLDCMSRG) are cleaved as a signal peptide. The Ig-like domain occupies 23-113 (EDVEQSLFLS…DSAIYFCAES (91 aa)). A glycan (N-linked (GlcNAc...) asparagine) is linked at N42. Residues C43 and C110 are joined by a disulfide bond.

In terms of assembly, alpha-beta TR is a heterodimer composed of an alpha and beta chain; disulfide-linked. The alpha-beta TR is associated with the transmembrane signaling CD3 coreceptor proteins to form the TR-CD3 (TcR or TCR). The assembly of alpha-beta TR heterodimers with CD3 occurs in the endoplasmic reticulum where a single alpha-beta TR heterodimer associates with one CD3D-CD3E heterodimer, one CD3G-CD3E heterodimer and one CD247 homodimer forming a stable octameric structure. CD3D-CD3E and CD3G-CD3E heterodimers preferentially associate with TR alpha and TR beta chains, respectively. The association of the CD247 homodimer is the last step of TcR assembly in the endoplasmic reticulum and is required for transport to the cell surface.

The protein localises to the cell membrane. Its function is as follows. V region of the variable domain of T cell receptor (TR) alpha chain that participates in the antigen recognition. Alpha-beta T cell receptors are antigen specific receptors which are essential to the immune response and are present on the cell surface of T lymphocytes. Recognize peptide-major histocompatibility (MH) (pMH) complexes that are displayed by antigen presenting cells (APC), a prerequisite for efficient T cell adaptive immunity against pathogens. Binding of alpha-beta TR to pMH complex initiates TR-CD3 clustering on the cell surface and intracellular activation of LCK that phosphorylates the ITAM motifs of CD3G, CD3D, CD3E and CD247 enabling the recruitment of ZAP70. In turn ZAP70 phosphorylates LAT, which recruits numerous signaling molecules to form the LAT signalosome. The LAT signalosome propagates signal branching to three major signaling pathways, the calcium, the mitogen-activated protein kinase (MAPK) kinase and the nuclear factor NF-kappa-B (NF-kB) pathways, leading to the mobilization of transcription factors that are critical for gene expression and essential for T cell growth and differentiation. The T cell repertoire is generated in the thymus, by V-(D)-J rearrangement. This repertoire is then shaped by intrathymic selection events to generate a peripheral T cell pool of self-MH restricted, non-autoaggressive T cells. Post-thymic interaction of alpha-beta TR with the pMH complexes shapes TR structural and functional avidity. The protein is T cell receptor alpha variable 5 of Homo sapiens (Human).